Consider the following 371-residue polypeptide: Glutamate 5-kinase (371 aa).

An ATP-binding site is contributed by lysine 11. Residues serine 52, aspartate 139, and asparagine 151 each coordinate substrate. ATP is bound by residues 171 to 172 (TD) and 213 to 219 (TGGMATK). The 79-residue stretch at 278-356 (EGSLTLDEGA…AEIPYILGYE (79 aa)) folds into the PUA domain.

The protein belongs to the glutamate 5-kinase family.

The protein resides in the cytoplasm. It carries out the reaction L-glutamate + ATP = L-glutamyl 5-phosphate + ADP. The protein operates within amino-acid biosynthesis; L-proline biosynthesis; L-glutamate 5-semialdehyde from L-glutamate: step 1/2. Functionally, catalyzes the transfer of a phosphate group to glutamate to form L-glutamate 5-phosphate. The protein is Glutamate 5-kinase of Synechococcus sp. (strain JA-3-3Ab) (Cyanobacteria bacterium Yellowstone A-Prime).